Here is a 623-residue protein sequence, read N- to C-terminus: MAKIIGIDLGTTNSCVSVMEGGEPVVIPNAEGSRTTPSVVSFQANGERLIGQVAKRQAITNPEKTIISIKRYMGTDHKVNIDSTEYTPQQISAMVLQKLKADAEAYLGEKVTQAVITVPAYFNDSQRQATKDAGKIAGLEVLRIINEPTAASLAYGLDKMDTNEKILVYDLGGGTFDVSILELGDGVFEVKATNGDTKLGGDDFDQKLIDYIAETFKAENGIDLRNDKMAIQRLKEAAEKAKIELSSATQTNINLPFITADATGPKHIDMNLTRAKFNELTHDLVQRTLEPIKKSLEGSGYAMSDIDKIIMVGGSTRIPAVQDAVKDFTGKELSKGVNPDEVVAMGAAIQAGVLTGEVKDVLLLDVTPLTLGIETFGGVSTTLIEKNTTIPTRKSQVFSTAADGQTSVEIHVVQGERSMAADNKTLGRFTLSGIAPAPRGIPQIEVTFDIDANGIVNVSAKDKGTGKEANITITASTNLTDDEIEKAVNEAKKFEAEDKKRKESIEVKNNADQIVYQTEKTLTDLGDKVSAEDKAQIEEKVKAVKDVKEGEDLEAIKKATEDLTQTFYGISSKIYQQANPEGAQGAGFDPNNMGGANAGNASAENDKKDDNVVDADYKVEDDK.

Residue T175 is modified to Phosphothreonine; by autocatalysis. The interval 580-623 is disordered; it reads PEGAQGAGFDPNNMGGANAGNASAENDKKDDNVVDADYKVEDDK. Low complexity predominate over residues 591-603; sequence NNMGGANAGNASA. The segment covering 604–623 has biased composition (basic and acidic residues); that stretch reads ENDKKDDNVVDADYKVEDDK.

The protein belongs to the heat shock protein 70 family.

In terms of biological role, acts as a chaperone. This Clostridium botulinum (strain Okra / Type B1) protein is Chaperone protein DnaK.